A 433-amino-acid polypeptide reads, in one-letter code: tRNA(Ile2) 2-agmatinylcytidine synthetase TiaS (433 aa).

Belongs to the TiaS family.

It is found in the cytoplasm. It carries out the reaction cytidine(34) in tRNA(Ile2) + agmatine + ATP + H2O = 2-agmatinylcytidine(34) in tRNA(Ile2) + AMP + 2 phosphate + 2 H(+). Its function is as follows. ATP-dependent agmatine transferase that catalyzes the formation of 2-agmatinylcytidine (agm2C) at the wobble position (C34) of tRNA(Ile2), converting the codon specificity from AUG to AUA. The polypeptide is tRNA(Ile2) 2-agmatinylcytidine synthetase TiaS (Methanopyrus kandleri (strain AV19 / DSM 6324 / JCM 9639 / NBRC 100938)).